Here is a 581-residue protein sequence, read N- to C-terminus: ATP-dependent lipid A-core flippase (581 aa).

Helical transmembrane passes span 15–35 (LWPI…ALIL), 68–88 (LIVI…SYCI), 152–172 (IIGL…ILIV), 252–272 (PIIQ…ASFP), and 274–294 (IMET…IALM). The region spanning 27-309 (IVAAVALILN…LTNVNAQFQR (283 aa)) is the ABC transmembrane type-1 domain. The ABC transporter domain maps to 341 to 577 (IEFRNVTFCY…NGVYSQLHRM (237 aa)). 375–382 (GRSGSGKS) serves as a coordination point for ATP.

It belongs to the ABC transporter superfamily. Lipid exporter (TC 3.A.1.106) family. Homodimer.

The protein localises to the cell inner membrane. It carries out the reaction ATP + H2O + lipid A-core oligosaccharideSide 1 = ADP + phosphate + lipid A-core oligosaccharideSide 2.. Involved in lipopolysaccharide (LPS) biosynthesis. Translocates lipid A-core from the inner to the outer leaflet of the inner membrane. Transmembrane domains (TMD) form a pore in the inner membrane and the ATP-binding domain (NBD) is responsible for energy generation. In Photorhabdus laumondii subsp. laumondii (strain DSM 15139 / CIP 105565 / TT01) (Photorhabdus luminescens subsp. laumondii), this protein is ATP-dependent lipid A-core flippase.